The primary structure comprises 154 residues: UPF0178 protein Sala_2376 (154 aa).

This sequence belongs to the UPF0178 family.

The chain is UPF0178 protein Sala_2376 from Sphingopyxis alaskensis (strain DSM 13593 / LMG 18877 / RB2256) (Sphingomonas alaskensis).